The sequence spans 561 residues: MCSLAKSPSSDTSTIVRRSANYDPPIWSFDFIQSLPCKYKGEPYTSRSNKLKEEVKKMLVGMENSLVQLELIDTLQRLGISYHFENEIISILKKYFTNISTNKNPKYDLYATALEFRLLREYGYAVPQEIFNDFKDETGKFKASIKNDDIKGVLALYEASFYVKNGENILEEARVFTTEYLKRYVMMIDQNMILNDNMAILVRHALEMPLHWRTIRAEAKWFIEEYEKTQDKNGTLLEFAKLDFNMLQSIFQEDLKHVSRWWEHSKLGKNKMVYARDRLVEAFLWQVGIRFEPQFSHFRRISARIYALITIIDDIYDVYGTLEELELFTKAVERWDVKTVDELPDYMKLPFFTLFNTVNEMAYDVLEEHNFVSVEYLKNSWAELCRCYLEEAKWFYSGYKPTLKKYIENASLSIGGQVIFVYAFFSLTKSITNEALESLQEGHYAACRQGSLMLRLADDLGTSSDELKRGDILKSVQCYMHETGVSEDEAREHIKFLISEIWKEMNDEDEYNSIFSKEFVQACKNLGRMSLFMYQHGDGHASQDSHSRKRISDLIINPIPL.

Residues arginine 276, aspartate 313, aspartate 317, arginine 455, and aspartate 458 each contribute to the (2E)-geranyl diphosphate site. Mg(2+) contacts are provided by aspartate 313 and aspartate 317. A DDXXD motif motif is present at residues 313–317 (DDIYD). Mg(2+) is bound by residues aspartate 458, threonine 462, and glutamate 466.

This sequence belongs to the terpene synthase family. Tpsb subfamily. Mg(2+) is required as a cofactor. It depends on Mn(2+) as a cofactor. As to expression, expressed in glandular trichomes two to four weeks after flowering onset.

The catalysed reaction is (2E)-geranyl diphosphate = (1R,5R)-alpha-pinene + diphosphate. The enzyme catalyses (2E)-geranyl diphosphate = (4S)-limonene + diphosphate. It catalyses the reaction (2E)-geranyl diphosphate = sabinene + diphosphate. It carries out the reaction (2E)-geranyl diphosphate = beta-phellandrene + diphosphate. The catalysed reaction is (2E)-geranyl diphosphate = camphene + diphosphate. The enzyme catalyses (2E)-geranyl diphosphate = isoterpinolene + diphosphate. The protein operates within secondary metabolite biosynthesis; terpenoid biosynthesis. Its pathway is terpene metabolism; (-)-alpha-pinene biosynthesis; (-)-alpha-pinene from geranyl diphosphate: step 1/1. Its function is as follows. Involved in monoterpene (C10) olefins biosynthesis, constituants of cannabinoids and terpenoids-rich resins. Catalyzes mainly the conversion of (2E)-geranyl diphosphate to (+)-alpha-pinene, and also produces minor products such as camphene, sabinene, beta-phellandrene, (-)-limonene and isoterpinolene. In Cannabis sativa (Hemp), this protein is (+)-alpha-pinene synthase TPS2FN.